A 536-amino-acid chain; its full sequence is SNW domain-containing protein 1 (536 aa).

Residues 1-46 (MALTSFLPAPTQLSQDQLEAEEKARSQRSRQTSLVSSRREPPPYGY) form a disordered region. A2 bears the N-acetylalanine mark. S14 bears the Phosphoserine mark. Residue K23 forms a Glycyl lysine isopeptide (Lys-Gly) (interchain with G-Cter in SUMO2) linkage. Residues 59–79 (GDGGAFPEIHVAQYPLDMGRK) are interaction with PPIL1. Glycyl lysine isopeptide (Lys-Gly) (interchain with G-Cter in SUMO2) cross-links involve residues K81, K97, K115, K122, K141, K158, and K170. The tract at residues 174–339 (AQYIRYTPSQ…KARERRAGIK (166 aa)) is SNW. Residues S182 and S190 each carry the phosphoserine modification. Residue K193 forms a Glycyl lysine isopeptide (Lys-Gly) (interchain with G-Cter in SUMO2) linkage. The interval 209 to 234 (PPRFKINKKIPRGPPSPPAPVMHSPS) is disordered. S224, S232, and S234 each carry phosphoserine. Glycyl lysine isopeptide (Lys-Gly) (interchain with G-Cter in SUMO2) cross-links involve residues K240, K258, K286, K339, K344, K416, and K441. A disordered region spans residues 311-386 (KMAQKEKEKH…RSKLQRNENR (76 aa)). At S446 the chain carries Phosphoserine. A Glycyl lysine isopeptide (Lys-Gly) (interchain with G-Cter in SUMO2) cross-link involves residue K452. Composition is skewed to basic and acidic residues over residues 469–489 (TNRFVPDKEFSGSDRRQRGRE) and 503–530 (KFLEEAKQHGGSKRPSDSSRPKEHEHEG). Positions 469 to 536 (TNRFVPDKEF…EHEGKKRRKE (68 aa)) are disordered. Residues S479 and S481 each carry the phosphoserine modification. Residue K509 forms a Glycyl lysine isopeptide (Lys-Gly) (interchain with G-Cter in SUMO2) linkage.

This sequence belongs to the SNW family. Identified in the spliceosome C complex. Associates with U4/U6-U5 tri-small nuclear ribonucleoproteins (U4/U6-U5 tri-snRNPs). Component of the minor spliceosome, which splices U12-type introns. Interacts with SKI, SMAD2,SMAD3, RBPJ, RB1, PABPN1, MAGEA1, SIRT1, FOXN3, U2AF2, PPIL1, DAXX and ATP1B4. Interacts with VDR and RXRA; preferentially associates with VDR:RXRA heterodimers. Interacts with NCOR2. Interacts with MAML1. Interacts with NOTCH1 NICD; the interaction involves multimerized NOTCH1 NICD. Forms a complex with NOTCH1 NICD and MAML1; the association is dissociated by RBPJ. Associates with positive transcription elongation factor b (P-TEFb). Component of the SNARP complex which consists at least of SNIP1, SNW1, THRAP3, BCLAF1 and PNN.

It localises to the nucleus. Involved in pre-mRNA splicing as component of the spliceosome. As a component of the minor spliceosome, involved in the splicing of U12-type introns in pre-mRNAs. Required in the specific splicing of CDKN1A pre-mRNA; the function probably involves the recruitment of U2AF2 to the mRNA. May recruit PPIL1 to the spliceosome. May be involved in cyclin-D1/CCND1 mRNA stability through the SNARP complex which associates with both the 3'end of the CCND1 gene and its mRNA. Involved in transcriptional regulation. Modulates TGF-beta-mediated transcription via association with SMAD proteins, MYOD1-mediated transcription via association with PABPN1, RB1-mediated transcriptional repression, and retinoid-X receptor (RXR)- and vitamin D receptor (VDR)-dependent gene transcription in a cell line-specific manner probably involving coactivators NCOA1 and GRIP1. Is involved in NOTCH1-mediated transcriptional activation. Binds to multimerized forms of Notch intracellular domain (NICD) and is proposed to recruit transcriptional coactivators such as MAML1 to form an intermediate preactivation complex which associates with DNA-bound CBF-1/RBPJ to form a transcriptional activation complex by releasing SNW1 and redundant NOTCH1 NICD. The chain is SNW domain-containing protein 1 (SNW1) from Pongo abelii (Sumatran orangutan).